The sequence spans 176 residues: Ribosome maturation factor RimM (176 aa).

Residues 95-169 (EDEVYLFELE…TARIAPPPGL (75 aa)) form the PRC barrel domain.

It belongs to the RimM family. As to quaternary structure, binds ribosomal protein uS19.

Its subcellular location is the cytoplasm. In terms of biological role, an accessory protein needed during the final step in the assembly of 30S ribosomal subunit, possibly for assembly of the head region. Essential for efficient processing of 16S rRNA. May be needed both before and after RbfA during the maturation of 16S rRNA. It has affinity for free ribosomal 30S subunits but not for 70S ribosomes. This is Ribosome maturation factor RimM from Nitratidesulfovibrio vulgaris (strain ATCC 29579 / DSM 644 / CCUG 34227 / NCIMB 8303 / VKM B-1760 / Hildenborough) (Desulfovibrio vulgaris).